A 467-amino-acid chain; its full sequence is Chromosomal replication initiator protein DnaA (467 aa).

Residues 1 to 90 (MSLSLWQQCL…KPVTQTPQAA (90 aa)) form a domain I, interacts with DnaA modulators region. A domain II region spans residues 91 to 130 (VTSNVAAPALVAQTQPQRAAPSTRSGWDNVPAPAEPTYRS). Positions 131–347 (NVNVKHTFDN…GALNRVIANA (217 aa)) are domain III, AAA+ region. ATP contacts are provided by G175, G177, K178, and T179. The tract at residues 348 to 467 (NFTGRAITID…FSNLIRTLSS (120 aa)) is domain IV, binds dsDNA.

Belongs to the DnaA family. In terms of assembly, oligomerizes as a right-handed, spiral filament on DNA at oriC.

Its subcellular location is the cytoplasm. Plays an essential role in the initiation and regulation of chromosomal replication. ATP-DnaA binds to the origin of replication (oriC) to initiate formation of the DNA replication initiation complex once per cell cycle. Binds the DnaA box (a 9 base pair repeat at the origin) and separates the double-stranded (ds)DNA. Forms a right-handed helical filament on oriC DNA; dsDNA binds to the exterior of the filament while single-stranded (ss)DNA is stabiized in the filament's interior. The ATP-DnaA-oriC complex binds and stabilizes one strand of the AT-rich DNA unwinding element (DUE), permitting loading of DNA polymerase. After initiation quickly degrades to an ADP-DnaA complex that is not apt for DNA replication. Binds acidic phospholipids. This chain is Chromosomal replication initiator protein DnaA, found in Shigella dysenteriae serotype 1 (strain Sd197).